Here is a 358-residue protein sequence, read N- to C-terminus: Replication factor C subunit 5 (358 aa).

It belongs to the activator 1 small subunits family. As to quaternary structure, heteropentamer of subunits rfc1, rfc2, rfc3, rfc4 and rfc5 that forms a complex (RFC) with PCNA in the presence of ATP. Two other complexes exist where rfc1 can be replaced by either ctf18 or elg1 to form the ctf18-RFC or the elg1-RFC complexes respectively.

It localises to the nucleus. Its function is as follows. The elongation of primed DNA templates by DNA polymerase delta and epsilon requires the action of the accessory proteins PCNA and activator 1. The polypeptide is Replication factor C subunit 5 (rfc5) (Schizosaccharomyces pombe (strain 972 / ATCC 24843) (Fission yeast)).